Here is a 644-residue protein sequence, read N- to C-terminus: Far upstream element-binding protein 1 (644 aa).

Disordered stretches follow at residues 1–31 (MADY…NDAF) and 44–94 (KIGG…PMHQ). Alanine 2 is subject to N-acetylalanine. Positions 14-27 (SAGGGGGGGGGGGV) are enriched in gly residues. 2 positions are modified to phosphoserine: serine 52 and serine 55. Positions 65–77 (RPLEDGDQPDAKK) are enriched in basic and acidic residues. Polar residues predominate over residues 81-94 (QNDSFGTQLPPMHQ). KH domains lie at 100 to 164 (VMTE…KRLL), 185 to 251 (NAVQ…KEMV), and 275 to 339 (NEGI…AEII). Residue serine 140 is modified to Phosphoserine. At threonine 153 the chain carries Phosphothreonine. An omega-N-methylarginine mark is found at arginine 321, arginine 359, arginine 361, and arginine 363. The segment at 346 to 365 (VQAGNPGGPGPGGRGRGRGQ) is disordered. Gly residues predominate over residues 350–365 (NPGGPGPGGRGRGRGQ). The KH 4 domain maps to 376–443 (LQEFNFIVPT…QQIDYARQLI (68 aa)). At threonine 432 the chain carries Phosphothreonine. Disordered stretches follow at residues 447-532 (IGGP…GTDP) and 548-580 (QAQP…AGQV). Over residues 468–505 (PHGPPGPPGPGTPMGPYNPAPYNPGPPGPAPHGPPAPY) the composition is skewed to pro residues. Residues 556–573 (PAGAPTTTQTNGQGDQQN) are compositionally biased toward low complexity. Serine 630 carries the post-translational modification Phosphoserine.

As to quaternary structure, found in a complex with PUF60 and far upstream element (FUSE) DNA segment. Interacts with PUF60 and JTV1. In terms of processing, ubiquitinated. This targets the protein for proteasome-mediated degradation.

Its subcellular location is the nucleus. Regulates MYC expression by binding to a single-stranded far-upstream element (FUSE) upstream of the MYC promoter. May act both as activator and repressor of transcription. This chain is Far upstream element-binding protein 1 (FUBP1), found in Homo sapiens (Human).